The following is a 290-amino-acid chain: ATP synthase gamma chain (290 aa).

This sequence belongs to the ATPase gamma chain family. In terms of assembly, F-type ATPases have 2 components, CF(1) - the catalytic core - and CF(0) - the membrane proton channel. CF(1) has five subunits: alpha(3), beta(3), gamma(1), delta(1), epsilon(1). CF(0) has three main subunits: a, b and c.

Its subcellular location is the cell membrane. Its function is as follows. Produces ATP from ADP in the presence of a proton gradient across the membrane. The gamma chain is believed to be important in regulating ATPase activity and the flow of protons through the CF(0) complex. The protein is ATP synthase gamma chain of Roseiflexus sp. (strain RS-1).